A 340-amino-acid polypeptide reads, in one-letter code: Glyceraldehyde-3-phosphate dehydrogenase (340 aa).

NAD(+) is bound by residues 11 to 12 (TI) and G109. D-glyceraldehyde 3-phosphate is bound at residue 138–140 (SCN). The active-site Nucleophile is the C139. R167 is an NAD(+) binding site. 193-194 (HA) is a D-glyceraldehyde 3-phosphate binding site. Q300 lines the NAD(+) pocket.

It belongs to the glyceraldehyde-3-phosphate dehydrogenase family. As to quaternary structure, homotetramer.

It localises to the cytoplasm. It carries out the reaction D-glyceraldehyde 3-phosphate + phosphate + NADP(+) = (2R)-3-phospho-glyceroyl phosphate + NADPH + H(+). The enzyme catalyses D-glyceraldehyde 3-phosphate + phosphate + NAD(+) = (2R)-3-phospho-glyceroyl phosphate + NADH + H(+). Its pathway is carbohydrate degradation; glycolysis; pyruvate from D-glyceraldehyde 3-phosphate: step 1/5. This Metallosphaera sedula (strain ATCC 51363 / DSM 5348 / JCM 9185 / NBRC 15509 / TH2) protein is Glyceraldehyde-3-phosphate dehydrogenase.